The sequence spans 265 residues: Basic leucine zipper 6 (265 aa).

2 disordered regions span residues 1–24 (MAQL…SAGG) and 77–139 (LMSM…RDPK). Positions 85–97 (GGSSAPGSDNGGS) are enriched in low complexity. Residues 122-132 (TQEQAAATSPT) show a composition bias toward polar residues. The bZIP domain maps to 137 to 189 (DPKRVKRILANRQSAQRSRVRKLQYISELERSVTTLQNEVSVLSPRVAFLDQQ). The segment at 139 to 158 (KRVKRILANRQSAQRSRVRK) is basic motif. The segment at 165 to 186 (LERSVTTLQNEVSVLSPRVAFL) is leucine-zipper. The tract at residues 239–265 (LSGGLAADHAHVHGGPPPVRAEKELMS) is disordered.

As to expression, expressed in roots, shoots and panicles.

The protein localises to the nucleus. Functionally, transcription regulator. The protein is Basic leucine zipper 6 (BZIP06) of Oryza sativa subsp. japonica (Rice).